A 211-amino-acid polypeptide reads, in one-letter code: NADH-quinone oxidoreductase subunit A (211 aa).

3 consecutive transmembrane segments (helical) span residues 7–27 (WSALAFILAAIGLVIFMLVVP), 61–81 (FYLVAIFFVIFDLEALYLYAY), and 88–108 (VGWIGYATALIFVVDLLIGLI).

Belongs to the complex I subunit 3 family. In terms of assembly, NDH-1 is composed of 14 different subunits. Subunits NuoA, H, J, K, L, M, N constitute the membrane sector of the complex.

The protein resides in the cell inner membrane. The catalysed reaction is a quinone + NADH + 5 H(+)(in) = a quinol + NAD(+) + 4 H(+)(out). NDH-1 shuttles electrons from NADH, via FMN and iron-sulfur (Fe-S) centers, to quinones in the respiratory chain. The immediate electron acceptor for the enzyme in this species is believed to be ubiquinone. Couples the redox reaction to proton translocation (for every two electrons transferred, four hydrogen ions are translocated across the cytoplasmic membrane), and thus conserves the redox energy in a proton gradient. This Psychrobacter sp. (strain PRwf-1) protein is NADH-quinone oxidoreductase subunit A.